The following is a 105-amino-acid chain: Small ribosomal subunit protein uS10 (105 aa).

This sequence belongs to the universal ribosomal protein uS10 family. Part of the 30S ribosomal subunit.

Its function is as follows. Involved in the binding of tRNA to the ribosomes. The polypeptide is Small ribosomal subunit protein uS10 (Rickettsia felis (strain ATCC VR-1525 / URRWXCal2) (Rickettsia azadi)).